A 516-amino-acid chain; its full sequence is Putative glucosylceramidase 2 (516 aa).

The N-terminal stretch at 1-23 is a signal peptide; sequence MSIAWSCFVLGLFALASLQVALA. The Proton donor role is filled by E254. The active-site Nucleophile is E358.

It belongs to the glycosyl hydrolase 30 family.

It carries out the reaction a beta-D-glucosylceramide + H2O = an N-acyl-sphingoid base + D-glucose. The enzyme catalyses a beta-D-glucosyl-(1&lt;-&gt;1')-N-acylsphing-4-enine + H2O = an N-acylsphing-4-enine + D-glucose. It catalyses the reaction an N-acyl-1-beta-D-glucosyl-15-methylhexadecasphing-4-enine + H2O = an N-acyl-15-methylhexadecasphing-4-enine + D-glucose. It functions in the pathway lipid metabolism; sphingolipid metabolism. Its function is as follows. Glucosylceramidase that catalyzes the hydrolysis of glucosylceramides into free ceramides and glucose. C.elegans contain specific sphingoid bases, which are unique or different in structure compared to the sphingoid bases found in other animals. Two examples of these distinctive compounds are: 15-methylhexadecasphinganine and 15-methylhexadecasphing-4-enine. The chain is Putative glucosylceramidase 2 (gba-2) from Caenorhabditis elegans.